The following is a 291-amino-acid chain: Bifunctional protein FolD 1 (291 aa).

Residues 167–169 (GAS), Ile-192, and Ile-233 contribute to the NADP(+) site.

It belongs to the tetrahydrofolate dehydrogenase/cyclohydrolase family. As to quaternary structure, homodimer.

It carries out the reaction (6R)-5,10-methylene-5,6,7,8-tetrahydrofolate + NADP(+) = (6R)-5,10-methenyltetrahydrofolate + NADPH. The enzyme catalyses (6R)-5,10-methenyltetrahydrofolate + H2O = (6R)-10-formyltetrahydrofolate + H(+). It functions in the pathway one-carbon metabolism; tetrahydrofolate interconversion. Functionally, catalyzes the oxidation of 5,10-methylenetetrahydrofolate to 5,10-methenyltetrahydrofolate and then the hydrolysis of 5,10-methenyltetrahydrofolate to 10-formyltetrahydrofolate. The chain is Bifunctional protein FolD 1 from Pseudomonas putida (strain ATCC 47054 / DSM 6125 / CFBP 8728 / NCIMB 11950 / KT2440).